The sequence spans 308 residues: Porphobilinogen deaminase (308 aa).

Residue Cys241 is modified to S-(dipyrrolylmethanemethyl)cysteine.

Belongs to the HMBS family. Monomer. Dipyrromethane serves as cofactor.

It catalyses the reaction 4 porphobilinogen + H2O = hydroxymethylbilane + 4 NH4(+). Its pathway is porphyrin-containing compound metabolism; protoporphyrin-IX biosynthesis; coproporphyrinogen-III from 5-aminolevulinate: step 2/4. Tetrapolymerization of the monopyrrole PBG into the hydroxymethylbilane pre-uroporphyrinogen in several discrete steps. This Staphylococcus saprophyticus subsp. saprophyticus (strain ATCC 15305 / DSM 20229 / NCIMB 8711 / NCTC 7292 / S-41) protein is Porphobilinogen deaminase.